The sequence spans 64 residues: Large ribosomal subunit protein uL29 (64 aa).

It belongs to the universal ribosomal protein uL29 family.

The polypeptide is Large ribosomal subunit protein uL29 (Polynucleobacter necessarius subsp. necessarius (strain STIR1)).